The primary structure comprises 155 residues: 17.3 kDa class II heat shock protein (155 aa).

Positions 39 to 155 (DAKAMAATPA…KPKTIEVKVA (117 aa)) constitute a sHSP domain.

The protein belongs to the small heat shock protein (HSP20) family.

It is found in the cytoplasm. This chain is 17.3 kDa class II heat shock protein, found in Solanum peruvianum (Peruvian tomato).